A 172-amino-acid chain; its full sequence is MLDAFAKVVAQADARGEFLSNTQIDALLAIVSEGNKRLDVVNKITNNASAIVTNAARALFAEQPQLISPGGNAYTSRRMAACLRDMEIVLRYVSYAMIAGDASVLDDRCLNGLRETYQALGTPGASVAVAIQKMKDAALALVNDTTGTPAGDCASLVAEIATYFDRAAAAVA.

Residues Asn35 and Asp39 each coordinate (2R,3E)-phycoerythrobilin. (2R,3E)-phycocyanobilin is bound by residues Asn72, Cys82, and 84–85 (RD). Asn72 is subject to N4-methylasparagine. (2R,3E)-phycoerythrobilin is bound by residues 149 to 151 (PAG) and Cys153.

Belongs to the phycobiliprotein family. As to quaternary structure, heterododecamer of 6 alpha and 6 beta chains. The basic functional unit of phycobiliproteins is a ring-shaped hexamer formed from two back-to-back trimers contacting via the alpha chain subunits. The trimers are composed of alpha/beta subunit heterodimers arranged around a three-fold axis of symmetry. The phycoerythrins also contain a gamma subunit which is located in the center of the hexamer. In terms of processing, contains one covalently linked phycocyanobilin chromophore and one covalently linked phycoerythrobilin chromophore.

The protein resides in the plastid. The protein localises to the chloroplast thylakoid membrane. In terms of biological role, light-harvesting photosynthetic tetrapyrrole chromophore-protein from the phycobiliprotein complex (phycobilisome, PBS). Phycocyanin is the major phycobiliprotein in the PBS rod. This chain is R-phycocyanin beta chain (rpcB), found in Polysiphonia urceolata (Red alga).